Here is a 454-residue protein sequence, read N- to C-terminus: Protein disulfide-isomerase TMX3 (454 aa).

The first 24 residues, 1–24, serve as a signal peptide directing secretion; sequence MAAWKSWTALRLCATVVVLDMVVC. A Thioredoxin domain is found at 25 to 128; the sequence is KGFVEDLDES…KDDIIEFAHR (104 aa). The Lumenal segment spans residues 25-375; sequence KGFVEDLDES…TIVSIFKSSP (351 aa). Catalysis depends on nucleophile residues Cys-53 and Cys-56. A disulfide bond links Cys-53 and Cys-56. N-linked (GlcNAc...) asparagine glycans are attached at residues Asn-258 and Asn-313. Residues 376–396 traverse the membrane as a helical segment; sequence LMGCFLFGLPLGVISIMCYGI. The Cytoplasmic segment spans residues 397–454; sequence YTADTDGGYIEERYEVSKSENENQEQIEESKEQQEPSSGGSVVPTVQEPKDVLEKKKD. Residues 412–454 form a disordered region; it reads VSKSENENQEQIEESKEQQEPSSGGSVVPTVQEPKDVLEKKKD. A compositionally biased stretch (basic and acidic residues) spans 444 to 454; it reads EPKDVLEKKKD. The Di-lysine motif motif lies at 451–454; it reads KKKD.

It belongs to the protein disulfide isomerase family. Post-translationally, N-glycosylated. Widely expressed. Expressed in brain, testis, lung, skin, kidney, uterus, bone, stomach, liver, prostate, placenta, eye and muscle.

The protein localises to the endoplasmic reticulum membrane. It catalyses the reaction Catalyzes the rearrangement of -S-S- bonds in proteins.. Functionally, probable disulfide isomerase, which participates in the folding of proteins containing disulfide bonds. May act as a dithiol oxidase. Acts as a regulator of endoplasmic reticulum-mitochondria contact sites via its ability to regulate redox signals. This chain is Protein disulfide-isomerase TMX3 (TMX3), found in Homo sapiens (Human).